The chain runs to 201 residues: Small ribosomal subunit protein uS4 (201 aa).

A disordered region spans residues S20 to E46. Residues R93–L156 enclose the S4 RNA-binding domain.

The protein belongs to the universal ribosomal protein uS4 family. As to quaternary structure, part of the 30S ribosomal subunit. Contacts protein S5. The interaction surface between S4 and S5 is involved in control of translational fidelity.

One of the primary rRNA binding proteins, it binds directly to 16S rRNA where it nucleates assembly of the body of the 30S subunit. In terms of biological role, with S5 and S12 plays an important role in translational accuracy. The protein is Small ribosomal subunit protein uS4 of Ligilactobacillus salivarius (strain UCC118) (Lactobacillus salivarius).